Here is a 380-residue protein sequence, read N- to C-terminus: L-lactate dehydrogenase (380 aa).

The 380-residue stretch at 1–380 (MIISSTTDFR…DRSILAKTDR (380 aa)) folds into the FMN hydroxy acid dehydrogenase domain. Residue Tyr-24 participates in substrate binding. FMN-binding residues include Ser-106 and Gln-127. Residue Tyr-129 participates in substrate binding. Thr-155 provides a ligand contact to FMN. Arg-164 lines the substrate pocket. FMN is bound at residue Lys-251. The active-site Proton acceptor is His-275. Residue Arg-278 coordinates substrate. 306–330 (DGGVRSGLDVVRMLALGAKGVLLGR) provides a ligand contact to FMN.

It belongs to the FMN-dependent alpha-hydroxy acid dehydrogenase family. It depends on FMN as a cofactor.

It localises to the cell inner membrane. The catalysed reaction is (S)-lactate + A = pyruvate + AH2. Functionally, catalyzes the conversion of L-lactate to pyruvate. Is coupled to the respiratory chain. The chain is L-lactate dehydrogenase from Caulobacter sp. (strain K31).